Reading from the N-terminus, the 336-residue chain is Holliday junction branch migration complex subunit RuvB (336 aa).

The interval A4–Y184 is large ATPase domain (RuvB-L). Residues I23, R24, G65, K68, T69, T70, E131–Y133, R174, Y184, and R221 contribute to the ATP site. T69 is a Mg(2+) binding site. Positions Q185–N255 are small ATPAse domain (RuvB-S). The segment at A258–P336 is head domain (RuvB-H). Positions 294, 313, and 318 each coordinate DNA.

It belongs to the RuvB family. As to quaternary structure, homohexamer. Forms an RuvA(8)-RuvB(12)-Holliday junction (HJ) complex. HJ DNA is sandwiched between 2 RuvA tetramers; dsDNA enters through RuvA and exits via RuvB. An RuvB hexamer assembles on each DNA strand where it exits the tetramer. Each RuvB hexamer is contacted by two RuvA subunits (via domain III) on 2 adjacent RuvB subunits; this complex drives branch migration. In the full resolvosome a probable DNA-RuvA(4)-RuvB(12)-RuvC(2) complex forms which resolves the HJ.

Its subcellular location is the cytoplasm. It carries out the reaction ATP + H2O = ADP + phosphate + H(+). Functionally, the RuvA-RuvB-RuvC complex processes Holliday junction (HJ) DNA during genetic recombination and DNA repair, while the RuvA-RuvB complex plays an important role in the rescue of blocked DNA replication forks via replication fork reversal (RFR). RuvA specifically binds to HJ cruciform DNA, conferring on it an open structure. The RuvB hexamer acts as an ATP-dependent pump, pulling dsDNA into and through the RuvAB complex. RuvB forms 2 homohexamers on either side of HJ DNA bound by 1 or 2 RuvA tetramers; 4 subunits per hexamer contact DNA at a time. Coordinated motions by a converter formed by DNA-disengaged RuvB subunits stimulates ATP hydrolysis and nucleotide exchange. Immobilization of the converter enables RuvB to convert the ATP-contained energy into a lever motion, pulling 2 nucleotides of DNA out of the RuvA tetramer per ATP hydrolyzed, thus driving DNA branch migration. The RuvB motors rotate together with the DNA substrate, which together with the progressing nucleotide cycle form the mechanistic basis for DNA recombination by continuous HJ branch migration. Branch migration allows RuvC to scan DNA until it finds its consensus sequence, where it cleaves and resolves cruciform DNA. This chain is Holliday junction branch migration complex subunit RuvB, found in Salmonella choleraesuis (strain SC-B67).